A 402-amino-acid chain; its full sequence is MKISNASLLALLLPAASARFVEQAEQNRVMLFPDGIPEEPKSTTKYHIELSPGDTRWVTEDEKWELRRNGQRFFDITDHAELGTFNKRPYKKSVFPKKPTQKKDLEPLLKNLSKTEMEDHLTTFTSFHTRYYKSESGRQSSEWLLKQVRDTIKAAGADDTVTARHFEHAWGQNSIIATIPGKTNATVVIGAHQDSINLWLPSVLAAPGADDDGSGTVTILEAFRVLLQSEDIIKGNHENTIEFHWYSAEEGGLLGSQAIFTTYEKARRDVKAMLQQDMTGFVSRTLQAGEVESVGVIVDYVDPNLTDFIKKIIVEYCDIPYVETKCGYACSDHASASKAGYPSAFVIESAFEYSDNHIHTTDDLIKYLSFDHMLQHARMTLAFAYELAFADFAKLEKGHGDL.

Residues 1–18 (MKISNASLLALLLPAASA) form the signal peptide. The propeptide occupies 19–92 (RFVEQAEQNR…GTFNKRPYKK (74 aa)). Residues asparagine 111 and asparagine 184 are each glycosylated (N-linked (GlcNAc...) asparagine). Zn(2+) is bound by residues histidine 192, aspartate 211, glutamate 250, and aspartate 277. Asparagine 304 carries N-linked (GlcNAc...) asparagine glycosylation. A disulfide bond links cysteine 326 and cysteine 330. Histidine 359 contributes to the Zn(2+) binding site.

It belongs to the peptidase M28 family. M28E subfamily. As to quaternary structure, monomer. Zn(2+) serves as cofactor.

The protein localises to the secreted. Extracellular aminopeptidase that allows assimilation of proteinaceous substrates. The chain is Leucine aminopeptidase 1 (lap1) from Neurospora crassa (strain ATCC 24698 / 74-OR23-1A / CBS 708.71 / DSM 1257 / FGSC 987).